The following is a 297-amino-acid chain: Lipoprotein NlpD/LppB homolog (297 aa).

An N-terminal signal peptide occupies residues 1 to 22 (MDKGEGLRLAATLRQWTRLYGG). Cys23 carries the N-palmitoyl cysteine lipid modification. The S-diacylglycerol cysteine moiety is linked to residue Cys23. The 45-residue stretch at 67-111 (GQYIVRRGDTLYSIAFRFGWDWKALAARNGIAPPYTIQVGQAIQF) folds into the LysM domain. A disordered region spans residues 134–168 (TKPTPVPPAVSTSVPAKPAPAPASTTTPPSSGATP).

The protein belongs to the E.coli NlpD/Haemophilus LppB family.

It is found in the cell inner membrane. This Pseudomonas aeruginosa (strain ATCC 15692 / DSM 22644 / CIP 104116 / JCM 14847 / LMG 12228 / 1C / PRS 101 / PAO1) protein is Lipoprotein NlpD/LppB homolog.